The sequence spans 419 residues: Haloacid dehalogenase-like hydrolase domain-containing 5 (419 aa).

The signal sequence occupies residues 1 to 15 (MAALAGLGVLGAGRH).

The protein belongs to the HAD-like hydrolase superfamily.

The protein is Haloacid dehalogenase-like hydrolase domain-containing 5 of Mus musculus (Mouse).